The following is a 185-amino-acid chain: MASEARESPANNPGLSTNRDEATKGYIMQQTMFRIKDPKASLDFYSRVLGMSLLKRLDFSEMKFSLYFLGYEDTTTAPTDPTERTVWTFGQPATIELTHNWGTESDPEFKGYHNGNSEPRGFGHIGVTVDDVHKACERFEELGVEFAKKPNDGKMKNIAFIKDPDGYWIEIFDLKTIGTTTVNAA.

The segment at 1-22 (MASEARESPANNPGLSTNRDEA) is disordered. Positions 27-174 (IMQQTMFRIK…DGYWIEIFDL (148 aa)) constitute a VOC domain. Positions 30 and 34 each coordinate substrate. Q30 provides a ligand contact to Zn(2+). E96 contacts Zn(2+). Substrate-binding positions include N100, R120, H124, and 154-155 (KM). Residue H124 coordinates Zn(2+). Residue E170 participates in Zn(2+) binding. E170 serves as the catalytic Proton donor/acceptor.

It belongs to the glyoxalase I family. Requires Zn(2+) as cofactor.

The catalysed reaction is (R)-S-lactoylglutathione = methylglyoxal + glutathione. The protein operates within secondary metabolite metabolism; methylglyoxal degradation; (R)-lactate from methylglyoxal: step 1/2. In terms of biological role, catalyzes the conversion of hemimercaptal, formed from methylglyoxal and glutathione, to S-lactoylglutathione. This Arabidopsis thaliana (Mouse-ear cress) protein is Lactoylglutathione lyase.